The primary structure comprises 1188 residues: AT-rich interactive domain-containing protein 5B (1188 aa).

Residue lysine 130 forms a Glycyl lysine isopeptide (Lys-Gly) (interchain with G-Cter in SUMO2) linkage. Positions 251 to 278 (RPRKKKTCPQRRDSFSGSKDPNNNCDGK) are disordered. Serine 264 carries the post-translational modification Phosphoserine. The span at 265–275 (FSGSKDPNNNC) shows a compositional bias: polar residues. Positions 319-411 (RADEQAFLVA…LILPYERFIK (93 aa)) constitute an ARID domain. At lysine 337 the chain carries N6,N6-dimethyllysine. Residues 413-614 (EEDKPLPPIK…LTSQNEAEEE (202 aa)) are disordered. 4 stretches are compositionally biased toward basic and acidic residues: residues 445 to 459 (IKQEMAKNKKEKENT), 470 to 484 (SEQRKEEETLNHKSA), 493 to 504 (VKGKPEGHKDLG), and 526 to 535 (SEKEAEEMGD). Lysine 446 is covalently cross-linked (Glycyl lysine isopeptide (Lys-Gly) (interchain with G-Cter in SUMO2)). Residues lysine 494 and lysine 496 each participate in a glycyl lysine isopeptide (Lys-Gly) (interchain with G-Cter in SUMO2) cross-link. Polar residues predominate over residues 594–609 (PFSSFSATKPPLTSQN). Residues lysine 767, lysine 774, lysine 803, lysine 810, lysine 893, lysine 916, lysine 920, and lysine 935 each participate in a glycyl lysine isopeptide (Lys-Gly) (interchain with G-Cter in SUMO2) cross-link. Residues 958–978 (SPMTMSGPKKYPESLARSGKP) are disordered. Residues lysine 988, lysine 1000, and lysine 1013 each participate in a glycyl lysine isopeptide (Lys-Gly) (interchain with G-Cter in SUMO2) cross-link. The segment at 1030–1066 (AVSPLDPAKEASGKEKASEQESEGNKGAYGGHSGAAS) is disordered. Serine 1032 is subject to Phosphoserine. The span at 1036–1048 (PAKEASGKEKASE) shows a compositional bias: basic and acidic residues. Residues lysine 1055 and lysine 1070 each participate in a glycyl lysine isopeptide (Lys-Gly) (interchain with G-Cter in SUMO2) cross-link. Position 1133 is a phosphoserine (serine 1133).

This sequence belongs to the ARID5B family. In terms of processing, methylation at Lys-337 prevents DNA-binding. Demethylation by PHF2 promotes recruitment of the PHF2-ARID5B complex to promoters. In terms of tissue distribution, widely expressed. Expressed in lung, heart, small intestine, kidney, muscle and brain. Also expressed in spleen, thymus, endocrine organs and in uterus and testis.

Its subcellular location is the nucleus. In terms of biological role, transcription coactivator that binds to the 5'-AATA[CT]-3' core sequence and plays a key role in adipogenesis and liver development. Acts by forming a complex with phosphorylated PHF2, which mediates demethylation at Lys-337, leading to target the PHF2-ARID5B complex to target promoters, where PHF2 mediates demethylation of dimethylated 'Lys-9' of histone H3 (H3K9me2), followed by transcription activation of target genes. The PHF2-ARID5B complex acts as a coactivator of HNF4A in liver. Required for adipogenesis: regulates triglyceride metabolism in adipocytes by regulating expression of adipogenic genes. Overexpression leads to induction of smooth muscle marker genes, suggesting that it may also act as a regulator of smooth muscle cell differentiation and proliferation. The polypeptide is AT-rich interactive domain-containing protein 5B (Arid5b) (Mus musculus (Mouse)).